We begin with the raw amino-acid sequence, 223 residues long: ATP-dependent dethiobiotin synthetase BioD (223 aa).

11–16 (DIGKTY) serves as a coordination point for ATP. Residue Thr15 participates in Mg(2+) binding. The active site involves Lys36. Thr40 lines the substrate pocket. ATP is bound by residues Asp50, 110–113 (EGAG), and 174–175 (NN). Asp50 and Glu110 together coordinate Mg(2+).

The protein belongs to the dethiobiotin synthetase family. As to quaternary structure, homodimer. Requires Mg(2+) as cofactor.

It localises to the cytoplasm. It catalyses the reaction (7R,8S)-7,8-diammoniononanoate + CO2 + ATP = (4R,5S)-dethiobiotin + ADP + phosphate + 3 H(+). The protein operates within cofactor biosynthesis; biotin biosynthesis; biotin from 7,8-diaminononanoate: step 1/2. Its function is as follows. Catalyzes a mechanistically unusual reaction, the ATP-dependent insertion of CO2 between the N7 and N8 nitrogen atoms of 7,8-diaminopelargonic acid (DAPA, also called 7,8-diammoniononanoate) to form a ureido ring. This is ATP-dependent dethiobiotin synthetase BioD from Staphylococcus epidermidis (strain ATCC 35984 / DSM 28319 / BCRC 17069 / CCUG 31568 / BM 3577 / RP62A).